A 157-amino-acid polypeptide reads, in one-letter code: Endoribonuclease YbeY (157 aa).

Zn(2+) contacts are provided by His-116, His-120, and His-126.

Belongs to the endoribonuclease YbeY family. The cofactor is Zn(2+).

The protein localises to the cytoplasm. Single strand-specific metallo-endoribonuclease involved in late-stage 70S ribosome quality control and in maturation of the 3' terminus of the 16S rRNA. This Pseudarthrobacter chlorophenolicus (strain ATCC 700700 / DSM 12829 / CIP 107037 / JCM 12360 / KCTC 9906 / NCIMB 13794 / A6) (Arthrobacter chlorophenolicus) protein is Endoribonuclease YbeY.